The chain runs to 259 residues: MDDSVFISYCVVTGSFLGFQLLFSIISPRTFTKYSSTYRQLSFGKQCEWDSRCVSTTHALVVGSGCLYILAYDEAVNADPIWGDPFWVKMNVAITCGYLVHDLLLLARFWKVMRDPYMVCHHLAVFYSYGYVLNRGVLPYFANFRLISELSTPFVNQRWFFDVIGKPRSSWPVLLNGLAMALVFFIVRIAVIPSYYSQVFATFGTEGYIRLGIGPQVAWIVSCVVLDILNVFWMYKIARGFYKVVKAKPDGKPRRNHAD.

The next 6 membrane-spanning stretches (helical) occupy residues 6–26 (FISY…FSII), 53–73 (CVST…LAYD), 86–106 (FWVK…LLLL), 117–133 (YMVC…GYVL), 172–192 (PVLL…IAVI), and 213–233 (IGPQ…NVFW). Positions 44–246 (GKQCEWDSRC…IARGFYKVVK (203 aa)) constitute a TLC domain.

It belongs to the TLCD4 family.

It localises to the membrane. In Xenopus tropicalis (Western clawed frog), this protein is TLC domain-containing protein 4 (tlcd4).